Here is an 81-residue protein sequence, read N- to C-terminus: Acyl carrier protein (81 aa).

The Carrier domain maps to 2 to 80 (ASKEEILAGL…DAVDFIDGAQ (79 aa)). O-(pantetheine 4'-phosphoryl)serine is present on Ser-40.

Belongs to the acyl carrier protein (ACP) family. In terms of processing, 4'-phosphopantetheine is transferred from CoA to a specific serine of apo-ACP by AcpS. This modification is essential for activity because fatty acids are bound in thioester linkage to the sulfhydryl of the prosthetic group.

It localises to the cytoplasm. It functions in the pathway lipid metabolism; fatty acid biosynthesis. In terms of biological role, carrier of the growing fatty acid chain in fatty acid biosynthesis. The sequence is that of Acyl carrier protein from Micrococcus luteus (strain ATCC 4698 / DSM 20030 / JCM 1464 / CCM 169 / CCUG 5858 / IAM 1056 / NBRC 3333 / NCIMB 9278 / NCTC 2665 / VKM Ac-2230) (Micrococcus lysodeikticus).